The following is a 56-amino-acid chain: Large ribosomal subunit protein bL32 (56 aa).

Basic residues predominate over residues 1 to 20 (MAVPKRRTSRSNTRSRRSQW). The segment at 1–24 (MAVPKRRTSRSNTRSRRSQWKAKV) is disordered.

The protein belongs to the bacterial ribosomal protein bL32 family.

The polypeptide is Large ribosomal subunit protein bL32 (Frankia casuarinae (strain DSM 45818 / CECT 9043 / HFP020203 / CcI3)).